Reading from the N-terminus, the 234-residue chain is 2-C-methyl-D-erythritol 4-phosphate cytidylyltransferase (234 aa).

This sequence belongs to the IspD/TarI cytidylyltransferase family. IspD subfamily.

It catalyses the reaction 2-C-methyl-D-erythritol 4-phosphate + CTP + H(+) = 4-CDP-2-C-methyl-D-erythritol + diphosphate. Its pathway is isoprenoid biosynthesis; isopentenyl diphosphate biosynthesis via DXP pathway; isopentenyl diphosphate from 1-deoxy-D-xylulose 5-phosphate: step 2/6. Its function is as follows. Catalyzes the formation of 4-diphosphocytidyl-2-C-methyl-D-erythritol from CTP and 2-C-methyl-D-erythritol 4-phosphate (MEP). The protein is 2-C-methyl-D-erythritol 4-phosphate cytidylyltransferase of Photobacterium profundum (strain SS9).